We begin with the raw amino-acid sequence, 468 residues long: Abscisic acid 8'-hydroxylase 4 (468 aa).

The chain crosses the membrane as a helical span at residues 4-24 (IWFLVVPILILCLLLVRVIVS). Heme is bound at residue Cys-415.

It belongs to the cytochrome P450 family. Heme is required as a cofactor. In terms of tissue distribution, mainly expressed in flowers. Lower expression in siliques, rosette leaves, roots and stems. Not expressed in dry seeds. Expressed in silique envelopes, but not in embryo or endosperm during the seed development.

The protein localises to the membrane. It carries out the reaction 2-cis-(+)-abscisate + reduced [NADPH--hemoprotein reductase] + O2 = (+)-8'-hydroxyabscisate + oxidized [NADPH--hemoprotein reductase] + H2O + H(+). The protein operates within plant hormone degradation; abscisic acid degradation. Its function is as follows. Involved in the oxidative degradation of abscisic acid, but not in the isomerization of the produced 8'-hydroxyabscisic acid (8'-OH-ABA) to (-)-phaseic acid (PA). This is Abscisic acid 8'-hydroxylase 4 (CYP707A4) from Arabidopsis thaliana (Mouse-ear cress).